A 321-amino-acid chain; its full sequence is Protein ATP1B4 (321 aa).

The segment at 1-41 (MEPGMEMNTASEGGTRRGPENKHEEKVQDPNRGEAETKAEM) is disordered. At 1–72 (MEPGMEMNTA…RTCMGRTAKS (72 aa)) the chain is on the cytoplasmic side. Positions 14 to 41 (GTRRGPENKHEEKVQDPNRGEAETKAEM) are enriched in basic and acidic residues. The helical transmembrane segment at 73-93 (WGLILLFYFIFYTCLAGMFAF) threads the bilayer. Topologically, residues 94-321 (CMYVMLLTLS…RIIFTLSIGK (228 aa)) are extracellular. N-linked (GlcNAc...) asparagine glycans are attached at residues N132, N176, and N193. A disulfide bond links C165 and C184. 2 disulfide bridges follow: C194–C210 and C233–C293. Residues N239, N252, and N270 are each glycosylated (N-linked (GlcNAc...) asparagine).

This sequence belongs to the X(+)/potassium ATPases subunit beta family. Composed of two subunits: alpha (catalytic) and beta (accessory). In terms of processing, glycosylated. Expressed in skeletal muscle, intestine, heart, brain, retina, inner ear and skin.

Its subcellular location is the membrane. This is the non-catalytic component of the active enzyme, which catalyzes the hydrolysis of ATP coupled with the exchange of Na(+) and K(+) ions across the plasma membrane. The polypeptide is Protein ATP1B4 (ATP1B4) (Gallus gallus (Chicken)).